Here is a 137-residue protein sequence, read N- to C-terminus: Nucleoside diphosphate kinase (137 aa).

Positions 9, 57, 85, 91, 102, and 112 each coordinate ATP. Histidine 115 acts as the Pros-phosphohistidine intermediate in catalysis.

The protein belongs to the NDK family. As to quaternary structure, homotetramer. Mg(2+) is required as a cofactor.

The protein localises to the cytoplasm. It catalyses the reaction a 2'-deoxyribonucleoside 5'-diphosphate + ATP = a 2'-deoxyribonucleoside 5'-triphosphate + ADP. It carries out the reaction a ribonucleoside 5'-diphosphate + ATP = a ribonucleoside 5'-triphosphate + ADP. Its function is as follows. Major role in the synthesis of nucleoside triphosphates other than ATP. The ATP gamma phosphate is transferred to the NDP beta phosphate via a ping-pong mechanism, using a phosphorylated active-site intermediate. The sequence is that of Nucleoside diphosphate kinase from Campylobacter lari (strain RM2100 / D67 / ATCC BAA-1060).